Consider the following 513-residue polypeptide: ATP synthase subunit alpha (513 aa).

169 to 176 (GDRQTGKT) contacts ATP.

This sequence belongs to the ATPase alpha/beta chains family. In terms of assembly, F-type ATPases have 2 components, CF(1) - the catalytic core - and CF(0) - the membrane proton channel. CF(1) has five subunits: alpha(3), beta(3), gamma(1), delta(1), epsilon(1). CF(0) has three main subunits: a(1), b(2) and c(9-12). The alpha and beta chains form an alternating ring which encloses part of the gamma chain. CF(1) is attached to CF(0) by a central stalk formed by the gamma and epsilon chains, while a peripheral stalk is formed by the delta and b chains.

It localises to the cell inner membrane. The catalysed reaction is ATP + H2O + 4 H(+)(in) = ADP + phosphate + 5 H(+)(out). In terms of biological role, produces ATP from ADP in the presence of a proton gradient across the membrane. The alpha chain is a regulatory subunit. This is ATP synthase subunit alpha from Ruegeria sp. (strain TM1040) (Silicibacter sp.).